Reading from the N-terminus, the 247-residue chain is 5'-nucleotidase SurE (247 aa).

Asp8, Asp9, Ser39, and Asn91 together coordinate a divalent metal cation.

It belongs to the SurE nucleotidase family. A divalent metal cation serves as cofactor.

The protein resides in the cytoplasm. The catalysed reaction is a ribonucleoside 5'-phosphate + H2O = a ribonucleoside + phosphate. In terms of biological role, nucleotidase that shows phosphatase activity on nucleoside 5'-monophosphates. This chain is 5'-nucleotidase SurE, found in Leptospira biflexa serovar Patoc (strain Patoc 1 / Ames).